The primary structure comprises 405 residues: Deoxyguanosinetriphosphate triphosphohydrolase-like protein (405 aa).

The 145-residue stretch at 75–219 (RLTHTIEVAQ…AAIADDIAYN (145 aa)) folds into the HD domain.

The protein belongs to the dGTPase family. Type 2 subfamily.

This Rhizobium etli (strain ATCC 51251 / DSM 11541 / JCM 21823 / NBRC 15573 / CFN 42) protein is Deoxyguanosinetriphosphate triphosphohydrolase-like protein.